We begin with the raw amino-acid sequence, 127 residues long: uncharacterized protein (127 aa).

The next 2 membrane-spanning stretches (helical) occupy residues Leu-48 to Ile-68 and Val-83 to Asp-103.

It is found in the membrane. This is an uncharacterized protein from Saccharomyces cerevisiae (strain ATCC 204508 / S288c) (Baker's yeast).